A 396-amino-acid polypeptide reads, in one-letter code: Na(+)/H(+) antiporter NhaA 1 (396 aa).

12 helical membrane-spanning segments follow: residues 9-29 (LHNE…AMLI), 59-79 (LLLW…GLEL), 95-115 (VLPV…YVMF), 125-145 (GWAV…ALLG), 154-174 (LFLL…IAIF), 177-197 (SDLS…LFLL), 200-220 (IGVK…VAVL), 223-243 (GVHA…KGET), 260-280 (VVGL…SLAG), 281-301 (LGLN…LLLG), 332-352 (GVAL…SLAF), and 373-393 (ILSG…FSLA).

Belongs to the NhaA Na(+)/H(+) (TC 2.A.33) antiporter family.

It is found in the cell inner membrane. The enzyme catalyses Na(+)(in) + 2 H(+)(out) = Na(+)(out) + 2 H(+)(in). In terms of biological role, na(+)/H(+) antiporter that extrudes sodium in exchange for external protons. The protein is Na(+)/H(+) antiporter NhaA 1 of Magnetococcus marinus (strain ATCC BAA-1437 / JCM 17883 / MC-1).